Here is a 138-residue protein sequence, read N- to C-terminus: Basic phospholipase A2 homolog ammodytin L (138 aa).

The N-terminal stretch at 1–16 (MRILWIVAVCLIGVEG) is a signal peptide. 7 cysteine pairs are disulfide-bonded: C42-C131, C44-C60, C59-C111, C65-C138, C66-C104, C73-C97, and C91-C102. Residues 121-133 (KKYKVYLRFKCKG) are important for membrane-damaging activities in eukaryotes and bacteria; heparin-binding.

Belongs to the phospholipase A2 family. Group II subfamily. S49 sub-subfamily. In terms of tissue distribution, expressed by the venom gland.

The protein resides in the secreted. Snake venom phospholipase A2 homolog that lacks enzymatic activity. Is very active in inducing myonecrosis in vivo and shows a potent calcium-independent membrane-damaging activity in vitro, most probably by binding and incorporating in the membrane. Also acts as a presynaptic neurotoxin. A model of myotoxic mechanism has been proposed: an apo Lys49-PLA2 is activated by the entrance of a hydrophobic molecule (e.g. fatty acid) at the hydrophobic channel of the protein leading to a reorientation of a monomer. This reorientation causes a transition between 'inactive' to 'active' states, causing alignment of C-terminal and membrane-docking sites (MDoS) side-by-side and putting the membrane-disruption sites (MDiS) in the same plane, exposed to solvent and in a symmetric position for both monomers. The MDoS region stabilizes the toxin on membrane by the interaction of charged residues with phospholipid head groups. Subsequently, the MDiS region destabilizes the membrane with penetration of hydrophobic residues. This insertion causes a disorganization of the membrane, allowing an uncontrolled influx of ions (i.e. calcium and sodium), and eventually triggering irreversible intracellular alterations and cell death. In Vipera ammodytes ammodytes (Western sand viper), this protein is Basic phospholipase A2 homolog ammodytin L.